Consider the following 202-residue polypeptide: MSVVDMSLWEPRTELGRMVKEGKIRTIDEVFANNYIIKEPEIVDILVPGLKQELLNVNIVQRQTHAGERSLFQAVVAVGNEDGYVGVGIGKARQVRQAIEKAVREAKLNLIPVRRGCGSWKCSCDEPHSVPFVVKGKSGSVEVTLIPAPKGVGLVAGDVAKAVLRLAGVKDVWTHTRGDTRTTLNFALAVYNALRNTYYFKI.

An S5 DRBM domain is found at 50-113 (LKQELLNVNI…REAKLNLIPV (64 aa)).

The protein belongs to the universal ribosomal protein uS5 family. In terms of assembly, part of the 30S ribosomal subunit. Contacts protein S4.

In terms of biological role, with S4 and S12 plays an important role in translational accuracy. In Pyrobaculum arsenaticum (strain DSM 13514 / JCM 11321 / PZ6), this protein is Small ribosomal subunit protein uS5.